We begin with the raw amino-acid sequence, 2183 residues long: MDSLSVNQILYPEVHLDSPIVTNKIVAILEYARVPHAYSLEDPTLCQNIKHRLKNGFSNQMIINNVEVGNVIKSKLRSYPAHSHIPYPNCNQDLFNIEDKESTRKIRELLKKGNSLYSKVSDKVFQCLRDTNSRLGLGSELREDIKEKVINLGVYMHSSQWFEPFLFWFTVKTEMRSVIKSQTHTCHRRRHTPVFFTGSSVELLISRDLVAIISKESQHVYYLTFELVLMYCDVIEGRLMTETAMTIDARYTELLGRVRYMWKLIDGFFPALGNPTYQIVAMLEPLSLAYLQLRDITVELRGAFLNHCFTEIHDVLDQNGFSDEGTYHELIEALDYIFITDDIHLTGEIFSFFRSFGHPRLEAVTAAENVRKYMNQPKVIVYETLMKGHAIFCGIIINGYRDRHGGSWPPLTLPLHAADTIRNAQASGEGLTHEQCVDNWKSFAGVKFGCFMPLSLDSDLTMYLKDKALAALQREWDSVYPKEFLRYDPPKGTGSRRLVDVFLNDSSFDPYDVIMYVVSGAYLHDPEFNLSYSLKEKEIKETGRLFAKMTYKMRACQVIAENLISNGIGKYFKDNGMAKDEHDLTKALHTLAVSGVPKDLKESHRGGPVLKTYSRSPVHTSTRNVRAAKGFIGFPQVIRQDQDTDHPENMEAYETVSAFITTDLKKYCLNWRYETISLFAQRLNEIYGLPSFFQWLHKRLETSVLYVSDPHCPPDLDAHIPLYKVPNDQIFIKYPMGGIEGYCQKLWTISTIPYLYLAAYESGVRIASLVQGDNQTIAVTKRVPSTWPYNLKKREAARVTRDYFVILRQRLHDIGHHLKANETIVSSHFFVYSKGIYYDGLLVSQSLKSIARCVFWSETIVDETRAACSNIATTMAKSIERGYDRYLAYSLNVLKVIQQILISLGFTINSTMTRDVVIPLLTNNDLLIRMALLPAPIGGMNYLNMSRLFVRNIGDPVTSSIADLKRMILASLMPEETLHQVMTQQPGDSSFLDWASDPYSANLVCVQSITRLLKNITARFVLIHSPNPMLKGLFHDDSKEEDEGLAAFLMDRHIIVPRAAHEILDHSVTGARESIAGMLDTTKGLIRASMRKGGLTSRVITRLSNYDYEQFRAGMVLLTGRKRNVLIDKESCSVQLARALRSHMWARLARGRPIYGLEVPDVLESMRGHLIRRHETCVICECGSVNYGWFFVPSGCQLDDIDKETSSLRVPYIGSTTDERTDMKLAFVRAPSRSLRSAVRIATVYSWAYGDDDSSWNEAWLLARQRANVSLEELRVITPISTSTNLAHRLRDRSTQVKYSGTSLVRVARYTTISNDNLSFVISDKKVDTNFIYQQGMLLGLGVLETLFRLEKDTGSSNTVLHLHVETDCCVIPMIDHPRIPSSRKLELRAELCTNPLIYDNAPLIDRDTTRLYTQSHRRHLVEFVTWSTPQLYHILAKSTALSMIDLVTKFEKDHMNEISALIGDDDINSFITEFLVIEPRLFTIYLGQCAAINWAFDVHYHRPSGKYQMGELLSSFLSRMSKGVFKVLVNALSHPKIYKKFWHCGIIEPIHGPSLDAQNLHTTVCNMVYTCYMTYLDLLLNEELEEFTFLLCESDEDVVPDRFDNIQAKHLCVLADLYCQPGACPPIRGLRPVEKCAVLTDHIKAEARLSPAGSSWNINPIIVDHYSCSLTYLRRGSIKQIRLRVDPGFIFDALAEVNVSQPKIGSNNISNMSIKAFRPPHDDVAKLLKDINTSKHNLPISGGNLANYEIHAFRRIGLNSSACYKAVEISTLIRRCLEPGEDGLFLGEGSGSMLITYKEILKLNKCFYNSGVSANSRSGQRELAPYPSEVGLVEHRMGVGNIVKVLFNGRPEVTWVGSVDCFNFIVSNIPTSSVGFIHSDIETLPNKDTIEKLEELAAILSMALLLGKIGSILVIKLMPFSGDFVQGFISYVGSYYREVNLVYPRYSNFISTESYLVMTDLKANRLMNPEKIKQQIIESSVRTSPGLIGHILSIKQLSCIQAIVGDVVSRGDINPTLKKLTPIEQVLINCGLAINGPKLCKELIHHDVASGQDGLLNSILILYRELARFKDNRRSQQGMFHAYPVLVSSRQRELISRITRKFWGHILLYSGNRKLINKFIQNLKSGYLILDLHQNIFVKNLSKSEKQIIMTGGLKREWVFKVTVKETKEWYKLVGYSALIKD.

Residues 656-840 enclose the RdRp catalytic domain; the sequence is VSAFITTDLK…VYSKGIYYDG (185 aa). The Mononegavirus-type SAM-dependent 2'-O-MTase domain maps to 1755–1958; it reads RRIGLNSSAC…NFISTESYLV (204 aa). 1785-1794 lines the ATP pocket; sequence LFLGEGSGSM.

It belongs to the paramyxovirus L protein family. Interacts with the phophoprotein (via multimerization domain and XD domain); this interaction forms the polymerase L-P complex.

Its subcellular location is the virion. It localises to the host cytoplasm. The catalysed reaction is RNA(n) + a ribonucleoside 5'-triphosphate = RNA(n+1) + diphosphate. The enzyme catalyses a 5'-end (5'-triphosphoguanosine)-adenylyl-adenylyl-cytidylyl-adenosine in mRNA + 2 S-adenosyl-L-methionine = a 5'-end (N(7)-methyl 5'-triphosphoguanosine)-(2'-O-methyladenylyl)-adenylyl-cytidylyl-adenosine in mRNA + 2 S-adenosyl-L-homocysteine + H(+). It carries out the reaction a 5'-end (5'-triphosphoguanosine)-adenylyl-adenylyl-cytidylyl-adenosine in mRNA + S-adenosyl-L-methionine = a 5'-end (5'-triphosphoguanosine)-(2'-O-methyladenylyl)-adenylyl-cytidylyl-adenosine in mRNA + S-adenosyl-L-homocysteine + H(+). It catalyses the reaction a 5'-end triphospho-adenylyl-adenylyl-cytidylyl-adenosine in mRNA + GDP + H(+) = a 5'-end (5'-triphosphoguanosine)-adenylyl-adenylyl-cytidylyl-adenosine in mRNA + diphosphate. The catalysed reaction is a 5'-end (5'-triphosphoguanosine)-(2'-O-methyladenylyl)-adenylyl-cytidylyl-adenosine in mRNA + S-adenosyl-L-methionine = a 5'-end (N(7)-methyl 5'-triphosphoguanosine)-(2'-O-methyladenylyl)-adenylyl-cytidylyl-adenosine in mRNA + S-adenosyl-L-homocysteine. The enzyme catalyses GTP + H2O = GDP + phosphate + H(+). Functionally, RNA-directed RNA polymerase that catalyzes the transcription of viral mRNAs, their capping and polyadenylation. The template is composed of the viral RNA tightly encapsidated by the nucleoprotein (N). The viral polymerase binds to the genomic RNA at the 3' leader promoter, and transcribes subsequently all viral mRNAs with a decreasing efficiency. The first gene is the most transcribed, and the last the least transcribed. The viral phosphoprotein acts as a processivity factor. Capping is concomitant with initiation of mRNA transcription. Indeed, a GDP polyribonucleotidyl transferase (PRNTase) adds the cap structure when the nascent RNA chain length has reached few nucleotides. Ribose 2'-O methylation of viral mRNA cap precedes and facilitates subsequent guanine-N-7 methylation, both activities being carried by the viral polymerase. Polyadenylation of mRNAs occur by a stuttering mechanism at a slipery stop site present at the end viral genes. After finishing transcription of a mRNA, the polymerase can resume transcription of the downstream gene. In terms of biological role, RNA-directed RNA polymerase that catalyzes the replication of viral genomic RNA. The template is composed of the viral RNA tightly encapsidated by the nucleoprotein (N). The replicase mode is dependent on intracellular N protein concentration. In this mode, the polymerase replicates the whole viral genome without recognizing transcriptional signals, and the replicated genome is not caped or polyadenylated. This is RNA-directed RNA polymerase L (L) from Measles virus (strain Edmonston-AIK-C vaccine) (MeV).